The following is a 280-amino-acid chain: UPF0758 protein Atu1607 (280 aa).

The segment at 1–22 (MAKRPALPSADLSPTSGFEAGE) is disordered. The MPN domain occupies 158-280 (VLGSWSSVID…HASFKGLRLI (123 aa)). Zn(2+)-binding residues include histidine 229, histidine 231, and aspartate 242. Positions 229–242 (HNHPSGDPTPSRAD) match the JAMM motif motif.

The protein belongs to the UPF0758 family.

This Agrobacterium fabrum (strain C58 / ATCC 33970) (Agrobacterium tumefaciens (strain C58)) protein is UPF0758 protein Atu1607.